The primary structure comprises 360 residues: Geranylgeranyl pyrophosphate synthase 9, chloroplastic (360 aa).

A chloroplast-targeting transit peptide spans 1–39; sequence MATTVHLSSSSLFSQSRGRRDNSISSVKSLRKRTVLSLS. 3 residues coordinate isopentenyl diphosphate: Lys-106, Arg-109, and His-138. Mg(2+)-binding residues include Asp-145 and Asp-151. Dimethylallyl diphosphate is bound at residue Arg-156. Arg-157 contributes to the isopentenyl diphosphate binding site. Dimethylallyl diphosphate is bound by residues Lys-245, Thr-246, Gln-283, Lys-300, and Lys-310.

This sequence belongs to the FPP/GGPP synthase family. Monomer. No interactions with GGR. Requires Mg(2+) as cofactor.

The protein resides in the plastid. It is found in the chloroplast. It catalyses the reaction isopentenyl diphosphate + dimethylallyl diphosphate = (2E)-geranyl diphosphate + diphosphate. It carries out the reaction isopentenyl diphosphate + (2E)-geranyl diphosphate = (2E,6E)-farnesyl diphosphate + diphosphate. The enzyme catalyses isopentenyl diphosphate + (2E,6E)-farnesyl diphosphate = (2E,6E,10E)-geranylgeranyl diphosphate + diphosphate. The protein operates within isoprenoid biosynthesis; farnesyl diphosphate biosynthesis; farnesyl diphosphate from geranyl diphosphate and isopentenyl diphosphate: step 1/1. It functions in the pathway isoprenoid biosynthesis; geranyl diphosphate biosynthesis; geranyl diphosphate from dimethylallyl diphosphate and isopentenyl diphosphate: step 1/1. It participates in isoprenoid biosynthesis; geranylgeranyl diphosphate biosynthesis; geranylgeranyl diphosphate from farnesyl diphosphate and isopentenyl diphosphate: step 1/1. In terms of biological role, catalyzes the trans-addition of the three molecules of IPP onto DMAPP to form geranylgeranyl pyrophosphate. In Arabidopsis thaliana (Mouse-ear cress), this protein is Geranylgeranyl pyrophosphate synthase 9, chloroplastic (GGPPS9).